The chain runs to 1188 residues: Phospholipid-transporting ATPase IB (1188 aa).

Topologically, residues Met-1–Arg-94 are cytoplasmic. Position 45 is a phosphothreonine (Thr-45). Residues Ala-95–Thr-115 form a helical membrane-spanning segment. The Extracellular segment spans residues Gly-116–Thr-119. The helical transmembrane segment at Thr-120–Phe-140 threads the bilayer. Topologically, residues Lys-141 to Gln-316 are cytoplasmic. The chain crosses the membrane as a helical span at residues Ile-317–Tyr-337. Over Trp-338–Leu-364 the chain is Extracellular. Residues Thr-365 to Val-385 form a helical membrane-spanning segment. The Cytoplasmic portion of the chain corresponds to Lys-386–Val-887. Asp-428 (4-aspartylphosphate intermediate) is an active-site residue. 12 residues coordinate ATP: Asp-428, Lys-429, Thr-430, Glu-528, Phe-569, Lys-592, Arg-625, Thr-705, Gly-706, Asp-707, Arg-795, and Lys-801. Asp-428 is a Mg(2+) binding site. Mg(2+) is bound at residue Thr-430. Residue Asp-821 participates in Mg(2+) binding. ATP is bound by residues Asn-824 and Asp-825. Asp-825 contacts Mg(2+). A helical membrane pass occupies residues Val-888–Phe-908. Topologically, residues Glu-909–Arg-910 are extracellular. The helical transmembrane segment at Trp-911–Phe-931 threads the bilayer. The Cytoplasmic segment spans residues Glu-932 to Lys-959. Residues Val-960 to Met-980 form a helical membrane-spanning segment. Topologically, residues Lys-981–Tyr-997 are extracellular. Residues Leu-998–Leu-1018 traverse the membrane as a helical segment. The Cytoplasmic segment spans residues Glu-1019 to His-1028. Residues Leu-1029–Trp-1049 form a helical membrane-spanning segment. Residues Pro-1050–Thr-1063 are Extracellular-facing. A helical transmembrane segment spans residues Met-1064–Ile-1084. Topologically, residues Glu-1085–Lys-1188 are cytoplasmic. Residues Ser-1162–Lys-1188 are disordered. The span at Gln-1163–Lys-1182 shows a compositional bias: basic and acidic residues.

Belongs to the cation transport ATPase (P-type) (TC 3.A.3) family. Type IV subfamily. As to quaternary structure, component of a P4-ATPase flippase complex which consists of a catalytic alpha subunit and an accessory beta subunit. Interacts with TMEM30A to form a flippase complex. It depends on Mg(2+) as a cofactor. As to expression, strongly expressed in the brain, cerebellum, retina and testis.

The protein localises to the membrane. It is found in the golgi apparatus membrane. Its subcellular location is the endosome membrane. The protein resides in the cell membrane. It localises to the photoreceptor outer segment membrane. The protein localises to the photoreceptor inner segment membrane. It carries out the reaction ATP + H2O + phospholipidSide 1 = ADP + phosphate + phospholipidSide 2.. It catalyses the reaction a 1,2-diacyl-sn-glycero-3-phospho-L-serine(out) + ATP + H2O = a 1,2-diacyl-sn-glycero-3-phospho-L-serine(in) + ADP + phosphate + H(+). The enzyme catalyses a 1,2-diacyl-sn-glycero-3-phosphoethanolamine(in) + ATP + H2O = a 1,2-diacyl-sn-glycero-3-phosphoethanolamine(out) + ADP + phosphate + H(+). Catalytic component of a P4-ATPase flippase complex which catalyzes the hydrolysis of ATP coupled to the transport of aminophospholipids from the outer to the inner leaflet of various membranes and ensures the maintenance of asymmetric distribution of phospholipids. Able to translocate phosphatidylserine, but not phosphatidylcholine. Phospholipid translocation also seems to be implicated in vesicle formation and in uptake of lipid signaling molecules. Reconstituted to liposomes, the ATP8A2:TMEM30A flippase complex predominantly transports phosphatidylserine (PS) and to a lesser extent phosphatidylethanolamine (PE). Phospholipid translocation is not associated with a countertransport of an inorganic ion or other charged substrate from the cytoplasmic side toward the exoplasm in connection with the phosphorylation from ATP. ATP8A2:TMEM30A may be involved in regulation of neurite outgrowth. Proposed to function in the generation and maintenance of phospholipid asymmetry in photoreceptor disk membranes and neuronal axon membranes. May be involved in vesicle trafficking in neuronal cells. Required for normal visual and auditory function; involved in photoreceptor and inner ear spiral ganglion cell survival. The sequence is that of Phospholipid-transporting ATPase IB from Homo sapiens (Human).